Reading from the N-terminus, the 73-residue chain is Long neurotoxin 3 (73 aa).

5 disulfide bridges follow: Cys3/Cys21, Cys14/Cys42, Cys27/Cys31, Cys46/Cys57, and Cys58/Cys63.

The protein belongs to the three-finger toxin family. Long-chain subfamily. Type II alpha-neurotoxin sub-subfamily. As to expression, expressed by the venom gland.

Its subcellular location is the secreted. Its function is as follows. Binds with high affinity to muscular (alpha-1/CHRNA1) and neuronal (alpha-7/CHRNA7) nicotinic acetylcholine receptor (nAChR) and inhibits acetylcholine from binding to the receptor, thereby impairing neuromuscular and neuronal transmission. This chain is Long neurotoxin 3, found in Ophiophagus hannah (King cobra).